A 517-amino-acid chain; its full sequence is GMP synthase [glutamine-hydrolyzing] (517 aa).

Positions 9–199 constitute a Glutamine amidotransferase type-1 domain; the sequence is RILILDFGSQ…VLGVCGCERL (191 aa). Residue C86 is the Nucleophile of the active site. Catalysis depends on residues H173 and E175. Positions 200–392 constitute a GMPS ATP-PPase domain; it reads WTSESIIEDA…LGLPYNMLYR (193 aa). An ATP-binding site is contributed by 227–233; that stretch reads SGGVDSS.

As to quaternary structure, homodimer.

It carries out the reaction XMP + L-glutamine + ATP + H2O = GMP + L-glutamate + AMP + diphosphate + 2 H(+). It functions in the pathway purine metabolism; GMP biosynthesis; GMP from XMP (L-Gln route): step 1/1. In terms of biological role, catalyzes the synthesis of GMP from XMP. The polypeptide is GMP synthase [glutamine-hydrolyzing] (Vibrio cholerae serotype O1 (strain ATCC 39541 / Classical Ogawa 395 / O395)).